The sequence spans 78 residues: MASLIQVRDLLALRGRMEATQISQTLNTPQPMINAMLQQLESMGKAVRIQEEPDGCLSGSCKSCPEGKACLREWWALR.

Iron-sulfur cluster is bound by residues Cys-56, Cys-61, Cys-64, and Cys-70.

The protein belongs to the FeoC family.

Functionally, may function as a transcriptional regulator that controls feoABC expression. In Escherichia coli O9:H4 (strain HS), this protein is Probable [Fe-S]-dependent transcriptional repressor.